The sequence spans 895 residues: Zinc finger protein 281 (895 aa).

Disordered stretches follow at residues 1–44 (MKIG…EMEP) and 63–113 (FTRP…AFPS). K2 is covalently cross-linked (Glycyl lysine isopeptide (Lys-Gly) (interchain with G-Cter in SUMO2)). Residues 7–36 (FLSGGGGTGSSGGSGSGGGGSGGGGGGGSS) are compositionally biased toward gly residues. Glycyl lysine isopeptide (Lys-Gly) (interchain with G-Cter in SUMO2) cross-links involve residues R65, K101, and K128. 2 stretches are compositionally biased toward basic and acidic residues: residues 130-140 (EKPADPEEQQS) and 202-218 (RTDDHHGTEEPKQDTNV). 2 disordered regions span residues 130–149 (EKPADPEEQQSHHHHHHHHY) and 183–253 (HVQQ…EGAI). Glycyl lysine isopeptide (Lys-Gly) (interchain with G-Cter in SUMO2) cross-links involve residues K213, K219, K225, K232, K242, and K259. C2H2-type zinc fingers lie at residues 261 to 283 (HICDHCSAAFRSSYHLRRHVLIH), 289 to 311 (FQCSQCSMGFIQKYLLQRHEKIH), and 317 to 339 (FGCDQCSMKFIQKYHMERHKRTH). Glycyl lysine isopeptide (Lys-Gly) (interchain with G-Cter in SUMO2) cross-links involve residues K301 and K325. The C2H2-type 4; atypical zinc-finger motif lies at 345-367 (YKCDTCQQYFSRTDRLLKHRRTC). A Glycyl lysine isopeptide (Lys-Gly) (interchain with G-Cter in SUMO2) cross-link involves residue K373. The segment at 377 to 427 (SAEPGSSNHTNMGNLAVLSQGNTSSSRRKTKSKSIAIENKEQKTGKTNESQ) is disordered. The segment covering 379-398 (EPGSSNHTNMGNLAVLSQGN) has biased composition (polar residues). The residue at position 395 (S395) is a Phosphoserine. Residues K409, K416, K460, and K477 each participate in a glycyl lysine isopeptide (Lys-Gly) (interchain with G-Cter in SUMO2) cross-link. S484 carries the phosphoserine modification. Glycyl lysine isopeptide (Lys-Gly) (interchain with G-Cter in SUMO2) cross-links involve residues K493, K498, K539, K599, K617, and K622. A disordered region spans residues 638-660 (SGEHSELVQEENLSPGTQTPSND). Residues 648–660 (ENLSPGTQTPSND) are compositionally biased toward polar residues. S651 carries the phosphoserine modification. Glycyl lysine isopeptide (Lys-Gly) (interchain with G-Cter in SUMO2) cross-links involve residues K661 and K670. Residues 778–789 (SSAFQSSSQKLT) are compositionally biased toward polar residues. The segment at 778-817 (SSAFQSSSQKLTSQKEQKNLESSTGFQIPSQELASQIDPQ) is disordered. Position 785 is a phosphoserine (S785). Glycyl lysine isopeptide (Lys-Gly) (interchain with G-Cter in SUMO2) cross-links involve residues K787, K792, and K795. Over residues 797-815 (LESSTGFQIPSQELASQID) the composition is skewed to polar residues. A Phosphoserine modification is found at S807. Glycyl lysine isopeptide (Lys-Gly) (interchain with G-Cter in SUMO2) cross-links involve residues K818 and K840. A Phosphothreonine modification is found at T888.

This sequence belongs to the krueppel C2H2-type zinc-finger protein family.

The protein resides in the nucleus. Transcription repressor that plays a role in regulation of embryonic stem cells (ESCs) differentiation. Required for ESCs differentiation and acts by mediating autorepression of NANOG in ESCs: binds to the NANOG promoter and promotes association of NANOG protein to its own promoter and recruits the NuRD complex, which deacetylates histones. Not required for establishement and maintenance of ESCs. Represses the transcription of a number of genes including GAST, ODC1 and VIM. Binds to the G-rich box in the enhancer region of these genes. This chain is Zinc finger protein 281 (ZNF281), found in Homo sapiens (Human).